We begin with the raw amino-acid sequence, 564 residues long: 4-hydroxy-7-methoxy-3-oxo-3,4-dihydro-2H-1,4-benzoxazin-2-yl glucoside beta-D-glucosidase 1d, chloroplastic (564 aa).

The N-terminal 50 residues, methionine 1 to alanine 50, are a transit peptide targeting the chloroplast. Residues glutamine 92, histidine 194, and asparagine 239–glutamate 240 each bind a beta-D-glucoside. Glutamate 240 serves as the catalytic Proton donor. Cysteine 259 and cysteine 265 are oxidised to a cystine. A beta-D-glucoside contacts are provided by residues tyrosine 383, glutamate 456, tryptophan 504, glutamate 511–tryptophan 512, and phenylalanine 520. The Nucleophile role is filled by glutamate 456.

The protein belongs to the glycosyl hydrolase 1 family. Homo- and heterohexamers. As to expression, expressed in young seedlings early after germination.

It is found in the plastid. The protein resides in the chloroplast. It carries out the reaction Hydrolysis of terminal, non-reducing beta-D-glucosyl residues with release of beta-D-glucose.. The catalysed reaction is DIMBOA beta-D-glucoside + H2O = DIMBOA + D-glucose. The enzyme catalyses DIBOA beta-D-glucoside + H2O = DIBOA + D-glucose. Acts in defense of young plant parts against pests via the production of hydroxamic acids from hydroxamic acid glucosides. Enzymatic activity is highly correlated with plant growth. The preferred substrate is DIMBOA-beta-D-glucoside. This Triticum aestivum (Wheat) protein is 4-hydroxy-7-methoxy-3-oxo-3,4-dihydro-2H-1,4-benzoxazin-2-yl glucoside beta-D-glucosidase 1d, chloroplastic (GLU1D).